A 644-amino-acid chain; its full sequence is Exoribonuclease 2 (644 aa).

Positions Arg189–Lys516 constitute an RNB domain. One can recognise an S1 motif domain in the interval Gly561 to Val643.

Belongs to the RNR ribonuclease family. RNase II subfamily.

The protein resides in the cytoplasm. It catalyses the reaction Exonucleolytic cleavage in the 3'- to 5'-direction to yield nucleoside 5'-phosphates.. Its function is as follows. Involved in mRNA degradation. Hydrolyzes single-stranded polyribonucleotides processively in the 3' to 5' direction. The sequence is that of Exoribonuclease 2 from Shigella flexneri serotype 5b (strain 8401).